The primary structure comprises 839 residues: Katanin p80 WD40 repeat-containing subunit B1 homolog KTN80.3 (839 aa).

WD repeat units follow at residues 14 to 54 (AHSA…AILS), 57 to 96 (GHSSGIDSVTFDASEGLVAAGAASGTIKLWDLEEAKVVRT), 99 to 138 (GHRSNCVSVNFHPFGEFFASGSLDTNLKIWDIRKKGCIHT), 141 to 182 (GHTR…HEFK), 184 to 222 (HEGKIQSLDFHPHEFLLATGSADKTVKFWDLETFELIGS), 225 to 265 (TETT…DGVD), and 267 to 304 (GWSNLSDMNVHEGKLLGCSYNQNCVGVWVVDLSRTEPM). Positions 115-131 (FFASGSLDTNLKIWDIR) match the DWD box motif. Disordered stretches follow at residues 303 to 340 (PMSGGATQSNSHPEKTSGSGRDQAGLNDNSSKVILGKL), 357 to 435 (GKLS…KSAS), 501 to 561 (LQSK…RTNK), and 575 to 648 (SLVR…PSNM). 6 stretches are compositionally biased toward polar residues: residues 307–334 (GATQSNSHPEKTSGSGRDQAGLNDNSSK), 375–385 (TGRSSVSQSSD), 411–435 (TLSSTGSVSDSPHRVTLTSAPKSAS), 501–533 (LQSKAADSRRLSSSRNEPDLPTSSLLERSQSQP), 589–602 (DLISYNANRDSSPT), and 630–648 (VSSSSGGNMTAPNSRPSNM).

Belongs to the WD repeat KATNB1 family. In terms of assembly, component of KTN80-KTN1 complexes composed of a hexamer of KTN1-KTN80 heterodimers that sense microtubule (MT) geometry to confer precise MT severing. Interacts directly with AAA1/KTN1 and KTN80.1, and weakly with KTN80.4. As to expression, expressed in siliques, flowers, leaves, stems and roots.

It localises to the cytoplasm. Its subcellular location is the cytoskeleton. May participate in a complex which severs microtubules in an ATP-dependent manner. Microtubule severing may promote rapid reorganization of cellular microtubule arrays. Confers precision to microtubule (MT) severing by specific targeting of KTN1 to MT cleavage sites such as crossover or branching nucleation sites. Together with other KTN80s, regulates cell elongation by modulating MT organization. In Arabidopsis thaliana (Mouse-ear cress), this protein is Katanin p80 WD40 repeat-containing subunit B1 homolog KTN80.3.